The sequence spans 361 residues: Probable dual-specificity RNA methyltransferase RlmN (361 aa).

The active-site Proton acceptor is the glutamate 102. The region spanning serine 108–aspartate 344 is the Radical SAM core domain. Cysteine 115 and cysteine 347 are disulfide-bonded. [4Fe-4S] cluster-binding residues include cysteine 122, cysteine 126, and cysteine 129. S-adenosyl-L-methionine contacts are provided by residues glycine 169–glutamate 170, serine 199, serine 228–histidine 230, and asparagine 304. Cysteine 347 functions as the S-methylcysteine intermediate in the catalytic mechanism.

Belongs to the radical SAM superfamily. RlmN family. Requires [4Fe-4S] cluster as cofactor.

It is found in the cytoplasm. It catalyses the reaction adenosine(2503) in 23S rRNA + 2 reduced [2Fe-2S]-[ferredoxin] + 2 S-adenosyl-L-methionine = 2-methyladenosine(2503) in 23S rRNA + 5'-deoxyadenosine + L-methionine + 2 oxidized [2Fe-2S]-[ferredoxin] + S-adenosyl-L-homocysteine. The enzyme catalyses adenosine(37) in tRNA + 2 reduced [2Fe-2S]-[ferredoxin] + 2 S-adenosyl-L-methionine = 2-methyladenosine(37) in tRNA + 5'-deoxyadenosine + L-methionine + 2 oxidized [2Fe-2S]-[ferredoxin] + S-adenosyl-L-homocysteine. Functionally, specifically methylates position 2 of adenine 2503 in 23S rRNA and position 2 of adenine 37 in tRNAs. This is Probable dual-specificity RNA methyltransferase RlmN from Synechococcus elongatus (strain ATCC 33912 / PCC 7942 / FACHB-805) (Anacystis nidulans R2).